The chain runs to 122 residues: Large ribosomal subunit protein uL14 (122 aa).

Belongs to the universal ribosomal protein uL14 family. Part of the 50S ribosomal subunit. Forms a cluster with proteins L3 and L19. In the 70S ribosome, L14 and L19 interact and together make contacts with the 16S rRNA in bridges B5 and B8.

Functionally, binds to 23S rRNA. Forms part of two intersubunit bridges in the 70S ribosome. In Psychromonas ingrahamii (strain DSM 17664 / CCUG 51855 / 37), this protein is Large ribosomal subunit protein uL14.